Reading from the N-terminus, the 103-residue chain is Conantokin R1-A (103 aa).

Residues 1–21 (MQLYTYLYLLVPLVTFHLILG) form the signal peptide. A propeptide spanning residues 22 to 79 (TGTLDHGGALTERRSTDATALKPEPVLQKSAARSTDDNGKDRLTQMKRILKKRGNNPR) is cleaved from the precursor. Residues 34–83 (RRSTDATALKPEPVLQKSAARSTDDNGKDRLTQMKRILKKRGNNPRADEE) form a disordered region. Residues 55-65 (STDDNGKDRLT) are compositionally biased toward basic and acidic residues. Residues E82, E83, and E89 each carry the 4-carboxyglutamate modification.

This sequence belongs to the conotoxin B superfamily. Requires Ca(2+) as cofactor. Mg(2+) serves as cofactor. Expressed by the venom duct.

The protein resides in the secreted. Conantokins inhibit N-methyl-D-aspartate (NMDA) receptors. This toxin has the highest potency for the NR2B/GRIN2B subunit (IC(50)=0.11 uM), followed by NR2D/GRIN2D (IC(50)=0.48 uM), NR2A/GRIN2A (IC(50)=2.1 uM), and NR2C/GRIN2C (IC(50)=6.1 uM) subunits when tested on rat receptors. The protein is Conantokin R1-A of Conus rolani (Cone snail).